Consider the following 181-residue polypeptide: UPF0232 protein SAV_4320 (181 aa).

A compositionally biased stretch (polar residues) spans 1–10 (MSDTPAQTPE). Disordered stretches follow at residues 1–64 (MSDT…GRDP) and 156–181 (QGPG…DTYG). Positions 30 to 39 (AAKEQARARG) are enriched in basic and acidic residues.

It belongs to the UPF0232 family.

The sequence is that of UPF0232 protein SAV_4320 from Streptomyces avermitilis (strain ATCC 31267 / DSM 46492 / JCM 5070 / NBRC 14893 / NCIMB 12804 / NRRL 8165 / MA-4680).